Reading from the N-terminus, the 100-residue chain is NADH-quinone oxidoreductase subunit K (100 aa).

3 helical membrane passes run 4 to 24 (LQHG…GLLI), 28 to 48 (LLFM…AFVV), and 60 to 80 (VMYI…LALL).

The protein belongs to the complex I subunit 4L family. As to quaternary structure, NDH-1 is composed of 13 different subunits. Subunits NuoA, H, J, K, L, M, N constitute the membrane sector of the complex.

The protein localises to the cell inner membrane. It carries out the reaction a quinone + NADH + 5 H(+)(in) = a quinol + NAD(+) + 4 H(+)(out). Its function is as follows. NDH-1 shuttles electrons from NADH, via FMN and iron-sulfur (Fe-S) centers, to quinones in the respiratory chain. The immediate electron acceptor for the enzyme in this species is believed to be ubiquinone. Couples the redox reaction to proton translocation (for every two electrons transferred, four hydrogen ions are translocated across the cytoplasmic membrane), and thus conserves the redox energy in a proton gradient. In Pectobacterium carotovorum subsp. carotovorum (strain PC1), this protein is NADH-quinone oxidoreductase subunit K.